The primary structure comprises 1507 residues: DNA-directed RNA polymerase subunit beta' (1507 aa).

4 residues coordinate Zn(2+): cysteine 71, cysteine 73, cysteine 86, and cysteine 89. Residues aspartate 470, aspartate 472, and aspartate 474 each coordinate Mg(2+). Cysteine 800, cysteine 874, cysteine 881, and cysteine 884 together coordinate Zn(2+).

Belongs to the RNA polymerase beta' chain family. In terms of assembly, the RNAP catalytic core consists of 2 alpha, 1 beta, 1 beta' and 1 omega subunit. When a sigma factor is associated with the core the holoenzyme is formed, which can initiate transcription. Mg(2+) serves as cofactor. Zn(2+) is required as a cofactor.

It catalyses the reaction RNA(n) + a ribonucleoside 5'-triphosphate = RNA(n+1) + diphosphate. DNA-dependent RNA polymerase catalyzes the transcription of DNA into RNA using the four ribonucleoside triphosphates as substrates. The sequence is that of DNA-directed RNA polymerase subunit beta' from Nitratiruptor sp. (strain SB155-2).